We begin with the raw amino-acid sequence, 443 residues long: L-ornithine N(5)-monooxygenase (443 aa).

Residues 45–53 (DKQGDYRWH) and glutamine 64 each bind FAD. Lysine 69 lines the substrate pocket. FAD is bound at residue valine 130. Residues 215–218 (GGQS) and arginine 240 contribute to the NADP(+) site. Substrate-binding positions include 254–257 (NEVF) and asparagine 284. 284 to 286 (NYS) serves as a coordination point for NADP(+). 407–409 (TLL) contributes to the FAD binding site. A substrate-binding site is contributed by serine 410.

This sequence belongs to the lysine N(6)-hydroxylase/L-ornithine N(5)-oxygenase family. In terms of assembly, homotetramer. FAD is required as a cofactor.

The protein resides in the cell inner membrane. The enzyme catalyses L-ornithine + NADPH + O2 = N(5)-hydroxy-L-ornithine + NADP(+) + H2O. Its pathway is siderophore biosynthesis; pyoverdin biosynthesis. Its function is as follows. Catalyzes the conversion of L-ornithine to N(5)-hydroxyornithine, the first step in the biosynthesis of all hydroxamate-containing siderophores, such as pyoverdin. Pyoverdin is a hydroxamate siderophore composed of a 6,7-dihydroxyquinoline-containing fluorescent chromophore joined to the N-terminus of a partly cyclic octapeptide (D-Ser-L-Arg-D-Ser-L-N(5)-OH-Orn-L-Lys-L-N(5)-OH-Orn-L-Thr-L-Thr in strain PAO1). Specific for NADPH, which plays a role in stabilization of the C4a-hydroperoxyflavin intermediate. The protein is L-ornithine N(5)-monooxygenase of Pseudomonas aeruginosa (strain ATCC 15692 / DSM 22644 / CIP 104116 / JCM 14847 / LMG 12228 / 1C / PRS 101 / PAO1).